Here is a 196-residue protein sequence, read N- to C-terminus: Large ribosomal subunit protein eL15 (196 aa).

Residues 69 to 98 (RKGGSRKQRHKAGRRSKRQGVNRLSRRKSI) show a composition bias toward basic residues. Disordered stretches follow at residues 69 to 100 (RKGG…SIQR) and 161 to 196 (FRGL…RQGK). Positions 186–196 (PSVTGNDRQGK) are enriched in polar residues.

This sequence belongs to the eukaryotic ribosomal protein eL15 family.

This chain is Large ribosomal subunit protein eL15, found in Halorubrum lacusprofundi (strain ATCC 49239 / DSM 5036 / JCM 8891 / ACAM 34).